We begin with the raw amino-acid sequence, 319 residues long: Tetrahydromethanopterin S-methyltransferase subunit H (319 aa).

The protein belongs to the MtrH family. In terms of assembly, the complex is composed of 8 subunits; MtrA, MtrB, MtrC, MtrD, MtrE, MtrF, MtrG and MtrH.

The catalysed reaction is 5-methyl-5,6,7,8-tetrahydromethanopterin + coenzyme M + 2 Na(+)(in) = 5,6,7,8-tetrahydromethanopterin + methyl-coenzyme M + 2 Na(+)(out). Its pathway is one-carbon metabolism; methanogenesis from CO(2); methyl-coenzyme M from 5,10-methylene-5,6,7,8-tetrahydromethanopterin: step 2/2. Part of a complex that catalyzes the formation of methyl-coenzyme M and tetrahydromethanopterin from coenzyme M and methyl-tetrahydromethanopterin. This is an energy-conserving, sodium-ion translocating step. MtrH catalyzes the transfer of the methyl group from methyl-tetrahydromethanopterin to the corrinoid prosthetic group of MtrA. The polypeptide is Tetrahydromethanopterin S-methyltransferase subunit H (Methanococcus maripaludis (strain DSM 14266 / JCM 13030 / NBRC 101832 / S2 / LL)).